The sequence spans 358 residues: Probable dual-specificity RNA methyltransferase RlmN 1 (358 aa).

In terms of domain architecture, Radical SAM core spans 101 to 326 (MQAGGTLCIS…REKGFYTLLR (226 aa)). Cysteine 108 and cysteine 337 form a disulfide bridge. [4Fe-4S] cluster-binding residues include cysteine 115, cysteine 119, and cysteine 122. Residues 162-163 (GE), serine 194, 218-220 (SLN), and asparagine 294 each bind S-adenosyl-L-methionine. Catalysis depends on cysteine 337, which acts as the S-methylcysteine intermediate.

The protein belongs to the radical SAM superfamily. RlmN family. It depends on [4Fe-4S] cluster as a cofactor.

The protein resides in the cytoplasm. It carries out the reaction adenosine(2503) in 23S rRNA + 2 reduced [2Fe-2S]-[ferredoxin] + 2 S-adenosyl-L-methionine = 2-methyladenosine(2503) in 23S rRNA + 5'-deoxyadenosine + L-methionine + 2 oxidized [2Fe-2S]-[ferredoxin] + S-adenosyl-L-homocysteine. It catalyses the reaction adenosine(37) in tRNA + 2 reduced [2Fe-2S]-[ferredoxin] + 2 S-adenosyl-L-methionine = 2-methyladenosine(37) in tRNA + 5'-deoxyadenosine + L-methionine + 2 oxidized [2Fe-2S]-[ferredoxin] + S-adenosyl-L-homocysteine. Functionally, specifically methylates position 2 of adenine 2503 in 23S rRNA and position 2 of adenine 37 in tRNAs. The sequence is that of Probable dual-specificity RNA methyltransferase RlmN 1 from Protochlamydia amoebophila (strain UWE25).